A 145-amino-acid polypeptide reads, in one-letter code: Transcription antitermination protein NusB (145 aa).

It belongs to the NusB family.

In terms of biological role, involved in transcription antitermination. Required for transcription of ribosomal RNA (rRNA) genes. Binds specifically to the boxA antiterminator sequence of the ribosomal RNA (rrn) operons. The protein is Transcription antitermination protein NusB of Geotalea daltonii (strain DSM 22248 / JCM 15807 / FRC-32) (Geobacter daltonii).